Consider the following 513-residue polypeptide: Alpha-1B-glycoprotein (513 aa).

An N-terminal signal peptide occupies residues 1-20; that stretch reads MSLLTTVLLLWGFTLGPGNA. 5 Ig-like V-type domains span residues 22–126, 127–219, 220–312, 313–415, and 416–513; these read WLDS…VTGK, EPLP…MSAT, QLPP…PVEL, MWSD…LRIN, and GPAP…VEGS. N-linked (GlcNAc...) asparagine glycosylation is found at Asn-44, Asn-89, and Asn-192. 5 disulfide bridges follow: Cys-49/Cys-96, Cys-153/Cys-195, Cys-245/Cys-292, Cys-343/Cys-392, and Cys-441/Cys-488. Asn-369, Asn-381, Asn-389, and Asn-485 each carry an N-linked (GlcNAc...) asparagine glycan.

In terms of assembly, interacts with CRISP3. In terms of tissue distribution, isoform 1 is expressed in normal liver. Isoform 2 is expressed in the regenerating liver after partial hepatectomy and at very low levels in the normal lung, brain and testis.

Its subcellular location is the secreted. The polypeptide is Alpha-1B-glycoprotein (Rattus norvegicus (Rat)).